The following is a 373-amino-acid chain: Diels-Alderase (373 aa).

Belongs to the Diels-Alderase family.

It catalyses the reaction (5S)-3-[(2E,6R,8E,10E,12E)-2,6-dimethyltetradeca-2,8,10,12-tetraenoyl]-5-(hydroxymethyl)pyrrolidine-2,4-dione = trichosetin. It functions in the pathway mycotoxin biosynthesis. Its function is as follows. Hybrid PKS-NRPS synthetase; part of the gene cluster that mediates the biosynthesis of trichosetin, a trans-fused decalin-containing tetramic acid with antimicrobial activity. The PKS module of PKS-NRPS1 together with the enoylreductase (ER) catalyze the formation of the polyketide unit which is then conjugated to L-serine by the condensation domain of the PKS-NRPS1 NRPS module. Activity of the Dieckmann cyclase domain (RED) results in release of the Dieckmann product intermediate. Diels-Alderase (DA) is involved in endo-selective Diels-Alder cycloaddition to form the decalin ring, leading to the production of N-desmethylequisetin also called trichosetin. The cluster does not contain the equisetin N-methyltransferase and consequently, trichosetin is isolated as final product. The chain is Diels-Alderase from Gibberella fujikuroi (strain CBS 195.34 / IMI 58289 / NRRL A-6831) (Bakanae and foot rot disease fungus).